A 286-amino-acid polypeptide reads, in one-letter code: Toxin zeta (286 aa).

Position 39–46 (39–46 (GQPGSGKT)) interacts with ATP. A disordered region spans residues 249–286 (MVQNQHQETPEFKAIQQKMESLQPPTPPIPKTPKLPGI). Residues 272–286 (PPTPPIPKTPKLPGI) are compositionally biased toward pro residues.

It belongs to the zeta toxin family. As to quaternary structure, in the presence of the epsilon antitoxin, forms an inactive PezA(2)PezT(2) heterotetramer.

It catalyses the reaction UDP-N-acetyl-alpha-D-glucosamine + ATP = UDP-N-acetyl-alpha-D-glucosamine 3'-phosphate + ADP + H(+). Functionally, toxic component of a type II toxin-antitoxin (TA) system. Phosphorylates UDP-N-acetyl-D-glucosamine (UNAG) on the 3'-hydroxyl group of the N-acetyl-D-glucosamine moiety, yielding UNAG-3P. UNAG-3P inhibits MurA, the first committed step in cell wall synthesis, which is then blocked. Phosphorylation is inhibited by cognate epsilon antitoxin. Part of a postsegregational killing (PSK) system involved in the killing of plasmid-free cells. The zeta toxin induces programmed cell death. The sequence is that of Toxin zeta from Enterococcus hirae.